The primary structure comprises 101 residues: Small ribosomal subunit protein uS14 (101 aa).

This sequence belongs to the universal ribosomal protein uS14 family. In terms of assembly, part of the 30S ribosomal subunit. Contacts proteins S3 and S10.

In terms of biological role, binds 16S rRNA, required for the assembly of 30S particles and may also be responsible for determining the conformation of the 16S rRNA at the A site. This Pseudomonas syringae pv. syringae (strain B728a) protein is Small ribosomal subunit protein uS14.